The chain runs to 181 residues: Adenine phosphoribosyltransferase (181 aa).

The protein belongs to the purine/pyrimidine phosphoribosyltransferase family. Homodimer.

Its subcellular location is the cytoplasm. It carries out the reaction AMP + diphosphate = 5-phospho-alpha-D-ribose 1-diphosphate + adenine. It participates in purine metabolism; AMP biosynthesis via salvage pathway; AMP from adenine: step 1/1. Functionally, catalyzes a salvage reaction resulting in the formation of AMP, that is energically less costly than de novo synthesis. The sequence is that of Adenine phosphoribosyltransferase from Vibrio parahaemolyticus serotype O3:K6 (strain RIMD 2210633).